The sequence spans 977 residues: Macrophage colony-stimulating factor 1 receptor (977 aa).

A signal peptide spans 1-19 (MELGPPLVLLLATVWHGQG). The Extracellular segment spans residues 20–515 (APVIEPSGPE…QLPDESLFTP (496 aa)). Ig-like C2-type domains are found at residues 24-104 (EPSG…VKDP), 107-197 (SWNL…KVNR), 204-298 (QIKL…VVES), 299-397 (AYLN…LTLR), and 398-503 (YPPE…SLGQ). 3 disulfides stabilise this stretch: Cys42-Cys84, Cys127-Cys177, and Cys224-Cys278. N-linked (GlcNAc...) asparagine glycosylation is found at Asn45 and Asn73. Asn302, Asn335, Asn389, Asn410, Asn449, Asn478, and Asn491 each carry an N-linked (GlcNAc...) asparagine glycan. Cys417 and Cys483 are oxidised to a cystine. A helical transmembrane segment spans residues 516-536 (VVVACMSVMSLLVLLLLLLLY). Residues 537–977 (KYKQKPKYQV…LLQPNNYQFC (441 aa)) lie on the Cytoplasmic side of the membrane. The segment at 540–572 (QKPKYQVRWKIIERYEGNSYTFIDPTQLPYNEK) is regulatory juxtamembrane domain. Phosphotyrosine; by autocatalysis is present on residues Tyr544 and Tyr559. Residues 580–913 (LQFGKTLGAG…ICFLLQEQAR (334 aa)) enclose the Protein kinase domain. Residues 586-594 (LGAGAFGKV) and Lys614 contribute to the ATP site. Tyr697 and Tyr706 each carry phosphotyrosine; by autocatalysis. Ser711 carries the phosphoserine modification. The residue at position 721 (Tyr721) is a Phosphotyrosine; by autocatalysis. The Proton acceptor role is filled by Asp776. Residues 794–816 (DFGLARDIMNDSNYVVKGNARLP) are activation loop. Tyr807 and Tyr921 each carry phosphotyrosine; by autocatalysis. The interval 921–957 (YANLPSSGGSSGSDSGGGSSGGSSSEPEEESSSEHLA) is disordered. The segment covering 929 to 941 (GSSGSDSGGGSSG) has biased composition (gly residues). Tyr974 carries the post-translational modification Phosphotyrosine; by autocatalysis.

The protein belongs to the protein kinase superfamily. Tyr protein kinase family. CSF-1/PDGF receptor subfamily. In terms of assembly, monomer. Homodimer. Interacts with CSF1 and IL34. Interaction with dimeric CSF1 or IL34 leads to receptor homodimerization. Interacts with INPPL1/SHIP2 and THOC5. Interacts (tyrosine phosphorylated) with PLCG2 (via SH2 domain). Interacts (tyrosine phosphorylated) with PIK3R1 (via SH2 domain). Interacts (tyrosine phosphorylated) with FYN, YES1 and SRC (via SH2 domain). Interacts (tyrosine phosphorylated) with CBL, GRB2 and SLA2. Autophosphorylated in response to CSF1 or IL34 binding. Phosphorylation at Tyr-559 is important for normal down-regulation of signaling by ubiquitination, internalization and degradation. Phosphorylation at Tyr-559 and Tyr-807 is important for interaction with SRC family members, including FYN, YES1 and SRC, and for subsequent activation of these protein kinases. Phosphorylation at Tyr-697 and Tyr-921 is important for interaction with GRB2. Phosphorylation at Tyr-721 is important for interaction with PIK3R1. Phosphorylation at Tyr-721 and Tyr-807 is important for interaction with PLCG2. Phosphorylation at Tyr-974 is important for interaction with CBL. Dephosphorylation by PTPN2 negatively regulates downstream signaling and macrophage differentiation. In terms of processing, ubiquitinated. Becomes rapidly polyubiquitinated after autophosphorylation, leading to its degradation. As to expression, widely expressed.

It localises to the cell membrane. The catalysed reaction is L-tyrosyl-[protein] + ATP = O-phospho-L-tyrosyl-[protein] + ADP + H(+). With respect to regulation, present in an inactive conformation in the absence of bound ligand. CSF1 or IL34 binding leads to dimerization and activation by autophosphorylation on tyrosine residues. Inhibited by imatinib/STI-571 (Gleevec), dasatinib, sunitinib/SU11248, lestaurtinib/CEP-701, midostaurin/PKC-412, Ki20227, linifanib/ABT-869, Axitinib/AG013736, sorafenib/BAY 43-9006 and GW2580. In terms of biological role, tyrosine-protein kinase that acts as a cell-surface receptor for CSF1 and IL34 and plays an essential role in the regulation of survival, proliferation and differentiation of hematopoietic precursor cells, especially mononuclear phagocytes, such as macrophages and monocytes. Promotes the release of pro-inflammatory chemokines in response to IL34 and CSF1, and thereby plays an important role in innate immunity and in inflammatory processes. Plays an important role in the regulation of osteoclast proliferation and differentiation, the regulation of bone resorption, and is required for normal bone and tooth development. Required for normal male and female fertility, and for normal development of milk ducts and acinar structures in the mammary gland during pregnancy. Promotes reorganization of the actin cytoskeleton, regulates formation of membrane ruffles, cell adhesion and cell migration, and promotes cancer cell invasion. Activates several signaling pathways in response to ligand binding, including the ERK1/2 and the JNK pathway. Phosphorylates PIK3R1, PLCG2, GRB2, SLA2 and CBL. Activation of PLCG2 leads to the production of the cellular signaling molecules diacylglycerol and inositol 1,4,5-trisphosphate, that then lead to the activation of protein kinase C family members, especially PRKCD. Phosphorylation of PIK3R1, the regulatory subunit of phosphatidylinositol 3-kinase, leads to activation of the AKT1 signaling pathway. Activated CSF1R also mediates activation of the MAP kinases MAPK1/ERK2 and/or MAPK3/ERK1, and of the SRC family kinases SRC, FYN and YES1. Activated CSF1R transmits signals both via proteins that directly interact with phosphorylated tyrosine residues in its intracellular domain, or via adapter proteins, such as GRB2. Promotes activation of STAT family members STAT3, STAT5A and/or STAT5B. Promotes tyrosine phosphorylation of SHC1 and INPP5D/SHIP-1. Receptor signaling is down-regulated by protein phosphatases, such as INPP5D/SHIP-1, that dephosphorylate the receptor and its downstream effectors, and by rapid internalization of the activated receptor. In the central nervous system, may play a role in the development of microglia macrophages. The polypeptide is Macrophage colony-stimulating factor 1 receptor (Csf1r) (Mus musculus (Mouse)).